The following is a 532-amino-acid chain: Flavin-containing monooxygenase 3 (532 aa).

FAD-binding positions include 9-13 (GAGVS), Glu32, 40-41 (LW), and 61-62 (NS). NADP(+) is bound by residues 60–61 (SN) and 195–198 (SGCD). Ser401 carries the post-translational modification Phosphoserine. Residues 510-530 (FFFHWLKLFAIPILLIAVFLV) traverse the membrane as a helical segment.

The protein belongs to the FMO family. FAD is required as a cofactor.

Its subcellular location is the microsome membrane. It is found in the endoplasmic reticulum membrane. It catalyses the reaction trimethylamine + NADPH + O2 = trimethylamine N-oxide + NADP(+) + H2O. It carries out the reaction N,N-dimethylaniline + NADPH + O2 + H(+) = N,N-dimethylaniline N-oxide + NADP(+) + H2O. The catalysed reaction is hypotaurine + NADPH + O2 + H(+) = taurine + NADP(+) + H2O. The enzyme catalyses (S)-nicotine + NADPH + O2 = trans-(S)-nicotine N(1')-oxide + NADP(+) + H2O. It catalyses the reaction albendazole + NADPH + O2 + H(+) = albendazole S-oxide + NADP(+) + H2O. Its function is as follows. Essential hepatic enzyme that catalyzes the oxygenation of a wide variety of nitrogen- and sulfur-containing compounds including drugs as well as dietary compounds. Plays an important role in the metabolism of trimethylamine (TMA), via the production of trimethylamine N-oxide (TMAO) metabolite. TMA is generated by the action of gut microbiota using dietary precursors such as choline, choline containing compounds, betaine or L-carnitine. By regulating TMAO concentration, FMO3 directly impacts both platelet responsiveness and rate of thrombus formation. This is Flavin-containing monooxygenase 3 (FMO3) from Pan troglodytes (Chimpanzee).